The following is a 72-amino-acid chain: uncharacterized protein (72 aa).

It localises to the plastid. The protein localises to the chloroplast. This is an uncharacterized protein from Oenothera berteroana (Bertero's evening primrose).